The sequence spans 133 residues: Aspartate 1-decarboxylase (133 aa).

The Schiff-base intermediate with substrate; via pyruvic acid role is filled by Ser26. Position 26 is a pyruvic acid (Ser) (Ser26). Thr58 lines the substrate pocket. Tyr59 functions as the Proton donor in the catalytic mechanism. Position 74-76 (74-76) interacts with substrate; that stretch reads GAA.

The protein belongs to the PanD family. Heterooctamer of four alpha and four beta subunits. Pyruvate serves as cofactor. Is synthesized initially as an inactive proenzyme, which is activated by self-cleavage at a specific serine bond to produce a beta-subunit with a hydroxyl group at its C-terminus and an alpha-subunit with a pyruvoyl group at its N-terminus.

Its subcellular location is the cytoplasm. The enzyme catalyses L-aspartate + H(+) = beta-alanine + CO2. The protein operates within cofactor biosynthesis; (R)-pantothenate biosynthesis; beta-alanine from L-aspartate: step 1/1. Functionally, catalyzes the pyruvoyl-dependent decarboxylation of aspartate to produce beta-alanine. The protein is Aspartate 1-decarboxylase of Legionella pneumophila (strain Lens).